The primary structure comprises 304 residues: MSLFHLIAPSGYCIKQHAALRGIQRLTDAGHQVNNVEVIARRCERFAGTETERLEDLNSLARLTTPNTIVLAVRGGYGASRLLADIDWQALVARQQHDPLLICGHSDFTAIQCGLLAHGNVITFSGPMLVANFGADELNAFTEHHFWLALRNETFTIEWQGEGPTCRAEGTLWGGNLAMLISLIGTPWMPKIENGILVLEDINEHPFRVERMLLQLYHAGILPRQKAIILGSFSGSTPNDYDAGYNLESVYAFLRSRLSIPLITGLDFGHEQRTVTLPLGAHAILNNTREGTQLTISGHPVLKM.

Serine 106 serves as the catalytic Nucleophile. Active-site charge relay system residues include glutamate 200 and histidine 270.

This sequence belongs to the peptidase S66 family.

Its subcellular location is the cytoplasm. The catalysed reaction is N-acetyl-D-glucosaminyl-N-acetylmuramoyl-L-alanyl-meso-2,6-diaminoheptanedioyl-D-alanine + H2O = N-acetyl-D-glucosaminyl-N-acetylmuramoyl-L-alanyl-meso-2,6-diaminoheptanedioate + D-alanine. It participates in cell wall biogenesis; peptidoglycan recycling. Its activity is regulated as follows. Inhibited by beta-lactams containing a D-amino acid side chain. Releases the terminal D-alanine residue from the cytoplasmic tetrapeptide recycling product L-Ala-gamma-D-Glu-meso-Dap-D-Ala. To a lesser extent, can also cleave D-Ala from murein derivatives containing the tetrapeptide, i.e. MurNAc-tetrapeptide, UDP-MurNAc-tetrapeptide, GlcNAc-MurNAc-tetrapeptide, and GlcNAc-anhMurNAc-tetrapeptide. Does not act on murein sacculi or cross-linked muropeptides. The tripeptides produced by the LcdA reaction can then be reused as peptidoglycan building blocks; LcdA is thereby involved in murein recycling. Is also essential for viability during stationary phase. The chain is Murein tetrapeptide carboxypeptidase (ldcA) from Escherichia coli (strain K12).